A 190-amino-acid chain; its full sequence is Peptidoglycan recognition protein 1 (190 aa).

The first 21 residues, 1–21, serve as a signal peptide directing secretion; sequence MSRRYTPLAWVLLALLGLGAA. Pyrrolidone carboxylic acid is present on glutamine 22. 3 disulfide bridges follow: cysteine 24-cysteine 148, cysteine 40-cysteine 85, and cysteine 61-cysteine 67. In terms of domain architecture, N-acetylmuramoyl-L-alanine amidase spans 46 to 174; sequence QPVRYVVVSH…RDVQQTLSPG (129 aa).

This sequence belongs to the N-acetylmuramoyl-L-alanine amidase 2 family. In terms of assembly, homodimer; disulfide-linked.

Its subcellular location is the secreted. It localises to the cytoplasmic granule. In terms of biological role, innate immunity protein that plays several important functions in antimicrobial and antitumor defense systems. Acts as a pattern receptor that binds to murein peptidoglycans (PGN) of Gram-positive bacteria and thus provides bactericidal activity. Forms an equimolar complex with heat shock protein HSPA1A and induces programmed cell death through apoptosis and necroptosis in tumor cell lines by activating the TNFR1 receptor on the target cell membrane. In addition, acts in complex with the Ca(2+)-binding protein S100A4 as a chemoattractant able to induce lymphocyte movement. Mechanistically, this complex acts as a ligand of the chemotactic receptors CCR5 and CXCR3 which are present on the cells of the immune system. Promotes also the activation of lymphocytes that become able to kill virus-infected cells as well as tumor cells by modulating the spectrum of their target-cell specificity. Induction of cytotoxicity on monocyte surface requires interaction with TREM1 receptor. In Bos indicus (Zebu), this protein is Peptidoglycan recognition protein 1 (PGLYRP1).